Consider the following 138-residue polypeptide: Sec-independent protein translocase protein TatB (138 aa).

The chain crosses the membrane as a helical span at residues 1–21 (MFDIGFSELLLIAVVALVVLG). Residues 116–138 (VHHVHVPPPSTSTHGNNGQEKSQ) form a disordered region. Residues 126-138 (TSTHGNNGQEKSQ) show a composition bias toward polar residues.

Belongs to the TatB family. In terms of assembly, the Tat system comprises two distinct complexes: a TatABC complex, containing multiple copies of TatA, TatB and TatC subunits, and a separate TatA complex, containing only TatA subunits. Substrates initially bind to the TatABC complex, which probably triggers association of the separate TatA complex to form the active translocon.

The protein localises to the cell inner membrane. Its function is as follows. Part of the twin-arginine translocation (Tat) system that transports large folded proteins containing a characteristic twin-arginine motif in their signal peptide across membranes. Together with TatC, TatB is part of a receptor directly interacting with Tat signal peptides. TatB may form an oligomeric binding site that transiently accommodates folded Tat precursor proteins before their translocation. The sequence is that of Sec-independent protein translocase protein TatB from Xylella fastidiosa (strain Temecula1 / ATCC 700964).